We begin with the raw amino-acid sequence, 607 residues long: Dihydroxy-acid dehydratase (607 aa).

Asp-81 lines the Mg(2+) pocket. Cys-122 is a binding site for [2Fe-2S] cluster. Positions 123 and 124 each coordinate Mg(2+). Lys-124 bears the N6-carboxylysine mark. Cys-195 contacts [2Fe-2S] cluster. Residue Glu-489 participates in Mg(2+) binding. Ser-515 acts as the Proton acceptor in catalysis.

Belongs to the IlvD/Edd family. In terms of assembly, homodimer. It depends on [2Fe-2S] cluster as a cofactor. Mg(2+) is required as a cofactor.

It catalyses the reaction (2R)-2,3-dihydroxy-3-methylbutanoate = 3-methyl-2-oxobutanoate + H2O. The enzyme catalyses (2R,3R)-2,3-dihydroxy-3-methylpentanoate = (S)-3-methyl-2-oxopentanoate + H2O. The protein operates within amino-acid biosynthesis; L-isoleucine biosynthesis; L-isoleucine from 2-oxobutanoate: step 3/4. It participates in amino-acid biosynthesis; L-valine biosynthesis; L-valine from pyruvate: step 3/4. Functions in the biosynthesis of branched-chain amino acids. Catalyzes the dehydration of (2R,3R)-2,3-dihydroxy-3-methylpentanoate (2,3-dihydroxy-3-methylvalerate) into 2-oxo-3-methylpentanoate (2-oxo-3-methylvalerate) and of (2R)-2,3-dihydroxy-3-methylbutanoate (2,3-dihydroxyisovalerate) into 2-oxo-3-methylbutanoate (2-oxoisovalerate), the penultimate precursor to L-isoleucine and L-valine, respectively. The chain is Dihydroxy-acid dehydratase from Deinococcus radiodurans (strain ATCC 13939 / DSM 20539 / JCM 16871 / CCUG 27074 / LMG 4051 / NBRC 15346 / NCIMB 9279 / VKM B-1422 / R1).